Here is a 93-residue protein sequence, read N- to C-terminus: Alpha-elapitoxin-Oh2a (93 aa).

The N-terminal stretch at 1-21 (MKTLLLTLVVVTIVCLDLGYT) is a signal peptide. Intrachain disulfides connect Cys24-Cys43, Cys36-Cys64, Cys49-Cys53, Cys68-Cys79, and Cys80-Cys85.

It belongs to the three-finger toxin family. Long-chain subfamily. Type II alpha-neurotoxin sub-subfamily. Expressed by the venom gland.

The protein resides in the secreted. Its function is as follows. Binds with high affinity to muscular (alpha-1/CHRNA1) and neuronal (alpha-7/CHRNA7) nicotinic acetylcholine receptor (nAChR) and inhibits acetylcholine from binding to the receptor, thereby impairing neuromuscular and neuronal transmission. This is Alpha-elapitoxin-Oh2a from Ophiophagus hannah (King cobra).